Consider the following 308-residue polypeptide: HTH-type transcriptional activator AllS (308 aa).

The HTH lysR-type domain occupies 2-59; the sequence is FDPETLRTFIAVAETGSFSKAAERLCKTTATISYRIKLLEENTGVALFFRTTRSVTLT. A DNA-binding region (H-T-H motif) is located at residues 19–38; it reads FSKAAERLCKTTATISYRIK.

Belongs to the LysR transcriptional regulatory family.

Its function is as follows. Positive regulator essential for the expression of allD operon. Binds to the allD promoter. This chain is HTH-type transcriptional activator AllS (allS), found in Escherichia coli O1:K1 / APEC.